Consider the following 255-residue polypeptide: F-box/SPRY domain-containing protein 1 (255 aa).

The 49-residue stretch at 3–51 (DPVAALCNFNVLEVIFSYLDLNDLSRCSQVCRSWHHFLNDENSDVWRWH) folds into the F-box domain. The B30.2/SPRY domain maps to 61–253 (MKSDLLTSVS…VSMVYLGTPL (193 aa)).

Belongs to the FBXO45/Fsn family. Component of an E3 ubiquitin ligase complex composed of hiw and Fsn.

It localises to the synapse. It participates in protein modification; protein ubiquitination. Required in the presynaptic motoneuron to down-regulate the levels of wnd and restrain synaptic terminal growth at the neuromuscular junction (NMJ). The sequence is that of F-box/SPRY domain-containing protein 1 from Drosophila willistoni (Fruit fly).